Here is a 334-residue protein sequence, read N- to C-terminus: Amino acid--[acyl-carrier-protein] ligase 2 (334 aa).

Residue Cys131 participates in Zn(2+) binding. Residues Arg159, Glu161, and 168-169 (RL) contribute to the ATP site. Glu176 is a binding site for Zn(2+). Glu176 provides a ligand contact to an L-alpha-amino acid. Residues Lys235 and 250–253 (ACMS) each bind ATP. Residue Cys279 participates in Zn(2+) binding. Arg286 is an ATP binding site.

This sequence belongs to the class-II aminoacyl-tRNA synthetase family. Amino acid--[acyl-carrier-protein] ligase subfamily. Homodimer. Zn(2+) serves as cofactor.

The catalysed reaction is an L-alpha-amino acid + holo-[ACP] + ATP = an L-alpha-aminoacyl-[ACP] + AMP + diphosphate. Its function is as follows. Catalyzes the ATP-dependent activation of L-glycine and its transfer to the phosphopantetheine prosthetic group covalently attached to the vicinal carrier protein blr6284 of yet unknown function. May participate in nonribosomal peptide synthesis or related processes. L-alanine is a poor substrate whereas L-serine or D-amino acids are not substrates for ATP-dependent activation. Does not display tRNA aminoacylation activity. The chain is Amino acid--[acyl-carrier-protein] ligase 2 from Bradyrhizobium diazoefficiens (strain JCM 10833 / BCRC 13528 / IAM 13628 / NBRC 14792 / USDA 110).